The following is a 485-amino-acid chain: MAQRFYDTRTAQIRDFEPLVPGEASVYYCGATVQGMPHVGHVRSAIVFDILIRWLEATGLRVTSVRNVTDIDDKILDRSAASHEAGFEASDLYPAREPWWALAYRFEKAFDAAYLALGVRRPTYEPRATGHVPEMFALIERLMERGHAYPAQDGSGDVYFDVRSWERYGELTRQRVEDMQDAPDADPRGKRDPHDFALWKGAKPGEPATAVWESPWGAGRPGWHLECSAMSTKYLGAEFDIHGGGLDLRFPHHENELAQSAAAGDGFARFWLHNGLVTYGGEKMSKSVGNTISPEEMLGMARPTAVRYFLGQAHYRSQLDYRPGALDEAEAVVERIEGFTARARAAGAVPPAPDGALADRVPAAFRTAMEDDLNVPQALAALHEAVRAGNSALAGQDLDAAAARLAEVEAMTAVLGLDDVPEGDDAAAGPVSDALDSLVRSQIEARAQARADKDWATADRIRDALAAAGVVVEDGADGATWRLAD.

Cys-29 is a Zn(2+) binding site. A 'HIGH' region motif is present at residues 31–41; sequence ATVQGMPHVGH. The tract at residues 174-198 is disordered; the sequence is QRVEDMQDAPDADPRGKRDPHDFAL. Residues 185 to 197 are compositionally biased toward basic and acidic residues; that stretch reads ADPRGKRDPHDFA. Zn(2+) contacts are provided by Cys-227, His-252, and Glu-256. The 'KMSKS' region signature appears at 283–287; the sequence is KMSKS. Lys-286 lines the ATP pocket.

It belongs to the class-I aminoacyl-tRNA synthetase family. As to quaternary structure, monomer. Zn(2+) serves as cofactor.

It localises to the cytoplasm. It carries out the reaction tRNA(Cys) + L-cysteine + ATP = L-cysteinyl-tRNA(Cys) + AMP + diphosphate. The chain is Cysteine--tRNA ligase from Micrococcus luteus (strain ATCC 4698 / DSM 20030 / JCM 1464 / CCM 169 / CCUG 5858 / IAM 1056 / NBRC 3333 / NCIMB 9278 / NCTC 2665 / VKM Ac-2230) (Micrococcus lysodeikticus).